The following is a 355-amino-acid chain: UDP-3-O-acylglucosamine N-acyltransferase (355 aa).

Residue H258 is the Proton acceptor of the active site.

This sequence belongs to the transferase hexapeptide repeat family. LpxD subfamily. Homotrimer.

It carries out the reaction a UDP-3-O-[(3R)-3-hydroxyacyl]-alpha-D-glucosamine + a (3R)-hydroxyacyl-[ACP] = a UDP-2-N,3-O-bis[(3R)-3-hydroxyacyl]-alpha-D-glucosamine + holo-[ACP] + H(+). It functions in the pathway bacterial outer membrane biogenesis; LPS lipid A biosynthesis. Catalyzes the N-acylation of UDP-3-O-acylglucosamine using 3-hydroxyacyl-ACP as the acyl donor. Is involved in the biosynthesis of lipid A, a phosphorylated glycolipid that anchors the lipopolysaccharide to the outer membrane of the cell. This chain is UDP-3-O-acylglucosamine N-acyltransferase, found in Bradyrhizobium diazoefficiens (strain JCM 10833 / BCRC 13528 / IAM 13628 / NBRC 14792 / USDA 110).